Here is a 161-residue protein sequence, read N- to C-terminus: 6,7-dimethyl-8-ribityllumazine synthase (161 aa).

Residues W25, 57–59 (AFE), and 80–82 (VVI) contribute to the 5-amino-6-(D-ribitylamino)uracil site. 85–86 (GT) contacts (2S)-2-hydroxy-3-oxobutyl phosphate. The active-site Proton donor is H88. F113 lines the 5-amino-6-(D-ribitylamino)uracil pocket. R127 is a (2S)-2-hydroxy-3-oxobutyl phosphate binding site.

Belongs to the DMRL synthase family.

It catalyses the reaction (2S)-2-hydroxy-3-oxobutyl phosphate + 5-amino-6-(D-ribitylamino)uracil = 6,7-dimethyl-8-(1-D-ribityl)lumazine + phosphate + 2 H2O + H(+). Its pathway is cofactor biosynthesis; riboflavin biosynthesis; riboflavin from 2-hydroxy-3-oxobutyl phosphate and 5-amino-6-(D-ribitylamino)uracil: step 1/2. In terms of biological role, catalyzes the formation of 6,7-dimethyl-8-ribityllumazine by condensation of 5-amino-6-(D-ribitylamino)uracil with 3,4-dihydroxy-2-butanone 4-phosphate. This is the penultimate step in the biosynthesis of riboflavin. This Kineococcus radiotolerans (strain ATCC BAA-149 / DSM 14245 / SRS30216) protein is 6,7-dimethyl-8-ribityllumazine synthase.